The following is a 164-amino-acid chain: 6,7-dimethyl-8-ribityllumazine synthase (164 aa).

5-amino-6-(D-ribitylamino)uracil-binding positions include tyrosine 30, 61-63 (ALE), and 85-87 (CVI). (2S)-2-hydroxy-3-oxobutyl phosphate is bound at residue 90–91 (ET). Histidine 93 (proton donor) is an active-site residue. Asparagine 118 is a 5-amino-6-(D-ribitylamino)uracil binding site. Position 132 (arginine 132) interacts with (2S)-2-hydroxy-3-oxobutyl phosphate.

This sequence belongs to the DMRL synthase family.

The catalysed reaction is (2S)-2-hydroxy-3-oxobutyl phosphate + 5-amino-6-(D-ribitylamino)uracil = 6,7-dimethyl-8-(1-D-ribityl)lumazine + phosphate + 2 H2O + H(+). It participates in cofactor biosynthesis; riboflavin biosynthesis; riboflavin from 2-hydroxy-3-oxobutyl phosphate and 5-amino-6-(D-ribitylamino)uracil: step 1/2. Catalyzes the formation of 6,7-dimethyl-8-ribityllumazine by condensation of 5-amino-6-(D-ribitylamino)uracil with 3,4-dihydroxy-2-butanone 4-phosphate. This is the penultimate step in the biosynthesis of riboflavin. This Methylobacterium radiotolerans (strain ATCC 27329 / DSM 1819 / JCM 2831 / NBRC 15690 / NCIMB 10815 / 0-1) protein is 6,7-dimethyl-8-ribityllumazine synthase.